A 144-amino-acid polypeptide reads, in one-letter code: 3-dehydroquinate dehydratase (144 aa).

Catalysis depends on Tyr-24, which acts as the Proton acceptor. Substrate-binding residues include Asn-73, His-79, and Asp-86. Catalysis depends on His-99, which acts as the Proton donor. Substrate is bound by residues 100 to 101 (LS) and Arg-110.

The protein belongs to the type-II 3-dehydroquinase family. Homododecamer.

It catalyses the reaction 3-dehydroquinate = 3-dehydroshikimate + H2O. Its pathway is metabolic intermediate biosynthesis; chorismate biosynthesis; chorismate from D-erythrose 4-phosphate and phosphoenolpyruvate: step 3/7. Functionally, catalyzes a trans-dehydration via an enolate intermediate. The polypeptide is 3-dehydroquinate dehydratase (Shewanella putrefaciens (strain CN-32 / ATCC BAA-453)).